We begin with the raw amino-acid sequence, 111 residues long: Nucleoid-associated protein Teth514_0034 (111 aa).

This sequence belongs to the YbaB/EbfC family. As to quaternary structure, homodimer.

Its subcellular location is the cytoplasm. The protein resides in the nucleoid. In terms of biological role, binds to DNA and alters its conformation. May be involved in regulation of gene expression, nucleoid organization and DNA protection. The chain is Nucleoid-associated protein Teth514_0034 from Thermoanaerobacter sp. (strain X514).